Reading from the N-terminus, the 113-residue chain is ATP-dependent Clp protease adapter protein ClpS (113 aa).

The tract at residues 1 to 26 (MLMQPLMMSDNPDDESDLGLLTKTRP) is disordered.

This sequence belongs to the ClpS family. In terms of assembly, binds to the N-terminal domain of the chaperone ClpA.

Its function is as follows. Involved in the modulation of the specificity of the ClpAP-mediated ATP-dependent protein degradation. This Ruegeria sp. (strain TM1040) (Silicibacter sp.) protein is ATP-dependent Clp protease adapter protein ClpS.